The chain runs to 141 residues: uncharacterized protein (141 aa).

A run of 2 helical transmembrane segments spans residues 64-84 (IAAVGLAVSGPGVLYKVIEAI) and 112-132 (IVGSGAAFVTALGVAAFLVLI).

It localises to the cell membrane. This is an uncharacterized protein from Sinorhizobium fredii (strain NBRC 101917 / NGR234).